The following is a 417-amino-acid chain: Tyrosine--tRNA ligase (417 aa).

Residue tyrosine 39 participates in L-tyrosine binding. The short motif at 44-53 (PTASSLHAGS) is the 'HIGH' region element. L-tyrosine contacts are provided by tyrosine 176 and glutamine 180. Residues 236 to 240 (KMGKS) carry the 'KMSKS' region motif. Lysine 239 is a binding site for ATP. Residues 350 to 417 (AGLLALLVQA…KKKHVLIKPL (68 aa)) enclose the S4 RNA-binding domain.

Belongs to the class-I aminoacyl-tRNA synthetase family. TyrS type 1 subfamily. In terms of assembly, homodimer.

The protein localises to the cytoplasm. It catalyses the reaction tRNA(Tyr) + L-tyrosine + ATP = L-tyrosyl-tRNA(Tyr) + AMP + diphosphate + H(+). Its function is as follows. Catalyzes the attachment of tyrosine to tRNA(Tyr) in a two-step reaction: tyrosine is first activated by ATP to form Tyr-AMP and then transferred to the acceptor end of tRNA(Tyr). This Bartonella quintana (strain Toulouse) (Rochalimaea quintana) protein is Tyrosine--tRNA ligase.